We begin with the raw amino-acid sequence, 290 residues long: 33 kDa chaperonin (290 aa).

2 disulfides stabilise this stretch: Cys-235/Cys-237 and Cys-268/Cys-271.

It belongs to the HSP33 family. In terms of processing, under oxidizing conditions two disulfide bonds are formed involving the reactive cysteines. Under reducing conditions zinc is bound to the reactive cysteines and the protein is inactive.

The protein localises to the cytoplasm. In terms of biological role, redox regulated molecular chaperone. Protects both thermally unfolding and oxidatively damaged proteins from irreversible aggregation. Plays an important role in the bacterial defense system toward oxidative stress. The sequence is that of 33 kDa chaperonin from Streptococcus sanguinis (strain SK36).